The sequence spans 263 residues: HTH-type transcriptional regulator KdgR (263 aa).

One can recognise an HTH iclR-type domain in the interval 13 to 74; that stretch reads VSSVLKVFGI…GESEKYSLTL (62 aa). The H-T-H motif DNA-binding region spans 34–53; the sequence is ITELSQRVMMSKSTVYRFLQ. The 170-residue stretch at 89 to 258 folds into the IclR-ED domain; sequence LIRSADIQMR…ARKISAQMGY (170 aa).

It is found in the cytoplasm. Its function is as follows. Transcriptional repressor that negatively regulates the expression of kdgT, kdgK and kdgA, which encode proteins involved in transport and catabolism of 2-keto-3-deoxygluconate (KDG). Also represses expression of eda, which encodes the Entner-Doudoroff aldolase, by binding to its P2 promoter region. This chain is HTH-type transcriptional regulator KdgR, found in Escherichia coli (strain K12).